A 600-amino-acid chain; its full sequence is PWWP domain-containing protein 2B (600 aa).

Disordered regions lie at residues 81 to 115 (ETGPLHPHHKDPEKDQPPKTAVSEPPPPLIPPVPA), 143 to 171 (WVPQPPPRTIKRTRRRLSRNRDPGRLILS), 186 to 350 (KSTV…LGDG), 366 to 408 (GCPR…PQGK), and 426 to 477 (DCTS…TVPP). Residues 104–115 (EPPPPLIPPVPA) show a composition bias toward pro residues. Residues 151 to 160 (TIKRTRRRLS) show a composition bias toward basic residues. Positions 187–200 (STVSPQEASPSPLN) are enriched in polar residues. Phosphoserine is present on residues S190 and S210. Over residues 239–252 (EKREEDRVAGERVP) the composition is skewed to basic and acidic residues. Phosphoserine is present on S254. The span at 286–297 (PQQSLQNGSQDS) shows a compositional bias: polar residues. Residues 298-309 (EVSRDVEPRGGG) are compositionally biased toward basic and acidic residues. The span at 328–339 (PVPPISDLPPPK) shows a compositional bias: pro residues. Residues 381 to 395 (DGSSHGLEDLSSGSS) show a composition bias toward low complexity. The span at 443 to 456 (SSGSEVTSPDTGDL) shows a compositional bias: polar residues. Position 457 is a phosphoserine (S457). Over residues 457 to 468 (SSGDSASVPSSS) the composition is skewed to low complexity. The region spanning 500–560 (VGDIVWGKIH…ISKLSPFSEF (61 aa)) is the PWWP domain.

In terms of assembly, component of a MTA1-specific subcomplex of the NuRD complex composed of PWWP2B, MTA1 and HDAC1 but does not contain CHD4 and MBD3. Interacts with MTA1, MTA2, MTA3, HDAC1, HDAC2, RBBP4, RBBP7, BRCC3 and ZNF516. Does not interact with CHD4 and MBD3. Deubiquitinated by BRCC3; leading to its stabilization. As to expression, expressed in the brown adipose tissue.

It localises to the nucleus. Chromatin-binding protein that acts as an adapter between distinct nucleosome components (H3K36me3 or H2A.Z) and chromatin-modifying complexes, contributing to the regulation of the levels of histone acetylation at actively transcribed genes. Competes with CHD4 and MBD3 for interaction with MTA1 to form a NuRD subcomplex, preventing the formation of full NuRD complex (containing CHD4 and MBD3), leading to recruitment of HDACs to gene promoters resulting in turn in the deacetylation of nearby H3K27 and H2A.Z. Plays a role in facilitating transcriptional elongation through regulation of histone acetylation. Negatively regulates brown adipocyte thermogenesis by interacting with and stabilizing HDAC1 at the UCP1 gene promoter, thereby promoting histone deacetylation at the promoter leading to the repression of UCP1 expression. The chain is PWWP domain-containing protein 2B (Pwwp2b) from Mus musculus (Mouse).